A 52-amino-acid chain; its full sequence is Alpha-crystallin B chain (52 aa).

The protein belongs to the small heat shock protein (HSP20) family. In terms of assembly, homodimer. Aggregates with homologous proteins, including alpha-A-crystallin and the small heat shock protein HSPB1, to form large heteromeric complexes.

Its function is as follows. May contribute to the transparency and refractive index of the lens. The polypeptide is Alpha-crystallin B chain (CRYAB) (Eudromia elegans (Elegant crested-tinamou)).